The primary structure comprises 239 residues: 1-(5-phosphoribosyl)-5-[(5-phosphoribosylamino)methylideneamino] imidazole-4-carboxamide isomerase (239 aa).

The Proton acceptor role is filled by Asp8. The Proton donor role is filled by Asp130.

It belongs to the HisA/HisF family.

It localises to the cytoplasm. The catalysed reaction is 1-(5-phospho-beta-D-ribosyl)-5-[(5-phospho-beta-D-ribosylamino)methylideneamino]imidazole-4-carboxamide = 5-[(5-phospho-1-deoxy-D-ribulos-1-ylimino)methylamino]-1-(5-phospho-beta-D-ribosyl)imidazole-4-carboxamide. Its pathway is amino-acid biosynthesis; L-histidine biosynthesis; L-histidine from 5-phospho-alpha-D-ribose 1-diphosphate: step 4/9. This chain is 1-(5-phosphoribosyl)-5-[(5-phosphoribosylamino)methylideneamino] imidazole-4-carboxamide isomerase, found in Streptococcus thermophilus (strain ATCC BAA-491 / LMD-9).